Here is an 875-residue protein sequence, read N- to C-terminus: Agglutinin-like protein 4 (875 aa).

The N-terminal stretch at 1–17 (MLLQFLLLSLCVSVATA) is a signal peptide. 4 disulfides stabilise this stretch: C73/C150, C96/C112, C205/C298, and C227/C256. ALS repeat units lie at residues 365–396 (TTITTSYVGVTTSYSTKTAPIGETATVIVDVP), 401–432 (TTVTSEWTGTITTTTTRTNPTDSIDTVVVQVP), 438–469 (VTTTEYWSQSYATTTTVTAPPGGTDSVIIREP), and 474–502 (VTTTEYWSQSYATTLTITAPPGGTNSVII). N-linked (GlcNAc...) asparagine glycosylation occurs at N542. Disordered stretches follow at residues 546-580 (THLPSSSSKPVDIPSSDVVTSTNDNSLTSLTGSEN) and 619-837 (TTII…LSQQ). A compositionally biased stretch (low complexity) spans 549–578 (PSSSSKPVDIPSSDVVTSTNDNSLTSLTGS). N626 carries N-linked (GlcNAc...) asparagine glycosylation. Over residues 627 to 641 (GSGKSKSGELSSTGS) the composition is skewed to low complexity. Positions 674 to 715 (STETQTTNNVPGSPNIPATGTTDIRESTTVSHTVTGNGNTGV) are enriched in polar residues. A compositionally biased stretch (low complexity) spans 722-746 (ALTTSTSLTGATNSATNPSHETGVN). Residues 755–764 (IVTPPSSATA) are compositionally biased toward polar residues. N-linked (GlcNAc...) asparagine glycans are attached at residues N789 and N811. Composition is skewed to low complexity over residues 789–816 (NGSTATTNIQGGNNEPGNQPGTNTTGEP) and 827–837 (SISQPTTLSQQ). A lipid anchor (GPI-anchor amidated aspartate) is attached at D852. Residues 853–875 (GSGSIVQHSAWLYVLLTAISIFF) constitute a propeptide, removed in mature form.

Belongs to the ALS family. Post-translationally, N-glycosylated and O-glycosylated.

It localises to the cell membrane. The protein resides in the secreted. It is found in the cell wall. Its function is as follows. Cell surface adhesion protein which mediates both yeast-to-host tissue adherence and yeast aggregation. Plays an important role in the pathogenesis of C.albicans infections. This chain is Agglutinin-like protein 4 (ALS4), found in Candida albicans (Yeast).